The following is a 382-amino-acid chain: Protein arginine N-methyltransferase 2 (382 aa).

2 ANK repeats span residues 22 to 46 (AAQTAAPSVLADLLAEGAPAWFQDD) and 48 to 80 (LGWSCLHYAAERKEPECLEVLLQGGAVWNAVDK). One can recognise an RMT2 domain in the interval 134–382 (KTSAGDNLVF…RLPIAKMSLI (249 aa)). S-adenosyl-L-methionine contacts are provided by residues phenylalanine 143, methionine 177, 205–210 (FGLGIV), 228–230 (EAH), 255–256 (WQ), and aspartate 284.

The protein belongs to the class I-like SAM-binding methyltransferase superfamily. RMT2 methyltransferase family. Monomer.

Its subcellular location is the cytoplasm. The protein resides in the nucleus. Its function is as follows. S-adenosyl-L-methionine-dependent protein-arginine N-methyltransferase that methylates the delta-nitrogen atom of arginine residues to form N5-methylarginine (type IV) in target proteins. Monomethylates ribosomal protein L12. In Cryptococcus neoformans var. neoformans serotype D (strain JEC21 / ATCC MYA-565) (Filobasidiella neoformans), this protein is Protein arginine N-methyltransferase 2.